Reading from the N-terminus, the 129-residue chain is Large ribosomal subunit protein bL12 (129 aa).

Belongs to the bacterial ribosomal protein bL12 family. In terms of assembly, homodimer. Part of the ribosomal stalk of the 50S ribosomal subunit. Forms a multimeric L10(L12)X complex, where L10 forms an elongated spine to which 2 to 4 L12 dimers bind in a sequential fashion. Binds GTP-bound translation factors.

In terms of biological role, forms part of the ribosomal stalk which helps the ribosome interact with GTP-bound translation factors. Is thus essential for accurate translation. This Treponema denticola (strain ATCC 35405 / DSM 14222 / CIP 103919 / JCM 8153 / KCTC 15104) protein is Large ribosomal subunit protein bL12.